The primary structure comprises 387 residues: Putative serine/threonine-protein kinase (387 aa).

The Protein kinase domain maps to 15-344 (YQIEKLLNRG…ERVLEGQVEI (330 aa)). ATP contacts are provided by residues 21–29 (LNRGGMDSY) and Lys55. Asp164 serves as the catalytic Proton acceptor. 2 helical membrane passes run 232–252 (PPNA…MLVG) and 363–383 (SIFT…LLIF).

Belongs to the protein kinase superfamily. Ser/Thr protein kinase family.

The protein resides in the cell membrane. It catalyses the reaction L-seryl-[protein] + ATP = O-phospho-L-seryl-[protein] + ADP + H(+). The enzyme catalyses L-threonyl-[protein] + ATP = O-phospho-L-threonyl-[protein] + ADP + H(+). This chain is Putative serine/threonine-protein kinase, found in Mycoplasma genitalium (strain ATCC 33530 / DSM 19775 / NCTC 10195 / G37) (Mycoplasmoides genitalium).